The sequence spans 101 residues: Small ribosomal subunit protein uS14 (101 aa).

It belongs to the universal ribosomal protein uS14 family. Part of the 30S ribosomal subunit. Contacts proteins S3 and S10.

Binds 16S rRNA, required for the assembly of 30S particles and may also be responsible for determining the conformation of the 16S rRNA at the A site. The sequence is that of Small ribosomal subunit protein uS14 from Wigglesworthia glossinidia brevipalpis.